Consider the following 999-residue polypeptide: Transcription-repair-coupling factor (999 aa).

Residues 499 to 656 (DLSSHRVMDR…LSQIKGISSL (158 aa)) enclose the Helicase ATP-binding domain. Position 512-519 (512-519 (GDVGFGKT)) interacts with ATP. Residues 609–612 (DEEH) carry the DEEH box motif. Positions 677-833 (LLKEIIYREL…SVAYHDLEIR (157 aa)) constitute a Helicase C-terminal domain.

In the N-terminal section; belongs to the UvrB family. The protein in the C-terminal section; belongs to the helicase family. RecG subfamily.

It localises to the cytoplasm. Couples transcription and DNA repair by recognizing RNA polymerase (RNAP) stalled at DNA lesions. Mediates ATP-dependent release of RNAP and its truncated transcript from the DNA, and recruitment of nucleotide excision repair machinery to the damaged site. In Helicobacter pylori (strain ATCC 700392 / 26695) (Campylobacter pylori), this protein is Transcription-repair-coupling factor.